A 29-amino-acid chain; its full sequence is Chassatide C1 (29 aa).

Positions 1–29 form a cross-link, cyclopeptide (Gly-Asn); it reads GDACGETCFTGICFTAGCSCNPWPTCTRN. Cystine bridges form between Cys4–Cys18, Cys8–Cys20, and Cys13–Cys26.

This is a cyclic peptide. Expressed in leaf, fruit, pedical and stem but not in root (at protein level).

Functionally, probably participates in a plant defense mechanism. The protein is Chassatide C1 of Chassalia chartacea (Chassalia curviflora).